We begin with the raw amino-acid sequence, 237 residues long: GATA zinc finger domain-containing protein 18 (237 aa).

Composition is skewed to low complexity over residues 1–28 (MAHN…KNNN) and 87–118 (NTST…PNSN). 3 disordered regions span residues 1–31 (MAHN…NSEY), 78–119 (PTNT…NSNL), and 140–186 (FEEG…GGCS). The segment covering 140-151 (FEEGDDEEETSS) has biased composition (acidic residues). The span at 152-167 (DSDSSSSSSTSSSSSE) shows a compositional bias: low complexity. Residues 185–212 (CSICKTQETPYWRKGKDGDKTVYLCNAC) form a GATA-type zinc finger.

The polypeptide is GATA zinc finger domain-containing protein 18 (gtaR) (Dictyostelium discoideum (Social amoeba)).